A 293-amino-acid polypeptide reads, in one-letter code: ATP phosphoribosyltransferase (293 aa).

This sequence belongs to the ATP phosphoribosyltransferase family. Long subfamily. Mg(2+) is required as a cofactor.

Its subcellular location is the cytoplasm. It carries out the reaction 1-(5-phospho-beta-D-ribosyl)-ATP + diphosphate = 5-phospho-alpha-D-ribose 1-diphosphate + ATP. It participates in amino-acid biosynthesis; L-histidine biosynthesis; L-histidine from 5-phospho-alpha-D-ribose 1-diphosphate: step 1/9. With respect to regulation, feedback inhibited by histidine. In terms of biological role, catalyzes the condensation of ATP and 5-phosphoribose 1-diphosphate to form N'-(5'-phosphoribosyl)-ATP (PR-ATP). Has a crucial role in the pathway because the rate of histidine biosynthesis seems to be controlled primarily by regulation of HisG enzymatic activity. In Nitratidesulfovibrio vulgaris (strain DP4) (Desulfovibrio vulgaris), this protein is ATP phosphoribosyltransferase.